Reading from the N-terminus, the 403-residue chain is Enoyl-[acyl-carrier-protein] reductase [NADH] (403 aa).

NAD(+) is bound by residues 49 to 54 (GASSGY), 75 to 76 (FE), 112 to 113 (DA), and 141 to 142 (LA). Position 227 (Tyr227) interacts with substrate. The Proton donor role is filled by Tyr237. Residues Lys246 and 276–278 (VVT) contribute to the NAD(+) site.

The protein belongs to the TER reductase family. Monomer.

The catalysed reaction is a 2,3-saturated acyl-[ACP] + NAD(+) = a (2E)-enoyl-[ACP] + NADH + H(+). The protein operates within lipid metabolism; fatty acid biosynthesis. Its function is as follows. Involved in the final reduction of the elongation cycle of fatty acid synthesis (FAS II). Catalyzes the reduction of a carbon-carbon double bond in an enoyl moiety that is covalently linked to an acyl carrier protein (ACP). The protein is Enoyl-[acyl-carrier-protein] reductase [NADH] of Pseudomonas putida (strain ATCC 47054 / DSM 6125 / CFBP 8728 / NCIMB 11950 / KT2440).